The following is a 415-amino-acid chain: Mitogen-activated protein kinase kinae MST7 (415 aa).

The segment at 1-37 (MADPFAPRTMKRRNVKGLALTPAAPKPPPTAENAPIH) is disordered. The Protein kinase domain occupies 61-326 (LEVIKDLGSG…EELFERDPFV (266 aa)). Residues 67–75 (LGSGNGGTV) and Lys-90 each bind ATP. Residues 363–409 (DLLRSSDSPTATYHGDDRPLETPTSAYRVDPRRGPAEGSAGLADQVD) form a disordered region.

The protein belongs to the protein kinase superfamily. STE Ser/Thr protein kinase family. MAP kinase kinase subfamily. Homodimer. Interacts with the adapter protein MST50. Interacts with TRX2.

The catalysed reaction is L-seryl-[protein] + ATP = O-phospho-L-seryl-[protein] + ADP + H(+). It catalyses the reaction L-threonyl-[protein] + ATP = O-phospho-L-threonyl-[protein] + ADP + H(+). Functionally, mitogen-activated protein kinase kinase; part of the MST11-MST7-PMK1 MAP kinase (MAPK) cascade that is essential for appressorium formation, penetration and invasive growth. The MST11-MST7-PMK1 MAP kinase cascade transduces signals from the cell surface sensors MDB2 and SHO1 that recognize various surface signals such as surface hydrophobicity, cutin monomers, and rice leaf waxes. MST7 acts as the upstream MAPKK that directly phosphorylates MAP kinase PMK1. This is Mitogen-activated protein kinase kinae MST7 from Pyricularia oryzae (strain 70-15 / ATCC MYA-4617 / FGSC 8958) (Rice blast fungus).